We begin with the raw amino-acid sequence, 608 residues long: UvrABC system protein C (608 aa).

The GIY-YIG domain occupies 22–100 (EKPGIYQYLN…IKKYKPRYNV (79 aa)). One can recognise a UVR domain in the interval 214-249 (QEISRLLYQRMQDLAAEMKFEEAQKVKEKYALIENY).

This sequence belongs to the UvrC family. Interacts with UvrB in an incision complex.

The protein localises to the cytoplasm. In terms of biological role, the UvrABC repair system catalyzes the recognition and processing of DNA lesions. UvrC both incises the 5' and 3' sides of the lesion. The N-terminal half is responsible for the 3' incision and the C-terminal half is responsible for the 5' incision. The sequence is that of UvrABC system protein C from Bacteroides fragilis (strain ATCC 25285 / DSM 2151 / CCUG 4856 / JCM 11019 / LMG 10263 / NCTC 9343 / Onslow / VPI 2553 / EN-2).